Here is a 297-residue protein sequence, read N- to C-terminus: CASP-like protein 2U8 (297 aa).

Topologically, residues 1–10 (MLELYEKRRA) are cytoplasmic. The chain crosses the membrane as a helical span at residues 11–31 (LLLLRLAAMFLSLAALLITVL). At 32 to 64 (NREDGFFSINVFGSPQPILAKATADFTLVKGLK) the chain is on the extracellular side. The chain crosses the membrane as a helical span at residues 65-85 (FFAGAMGIVAGYSFLQLAIAM). Over 86–101 (ASIFSGAPSILGGKRM) the chain is Cytoplasmic. The helical transmembrane segment at 102–122 (AWLCFVGDMTASHLCAAAAAV) threads the bilayer. Over 123–148 (SAQLAYLGKRGAPMWSAVCTYFSHYC) the chain is Extracellular. The helical transmembrane segment at 149–169 (LVFGLAVILAFLATLAALLVA) threads the bilayer. At 170–297 (SISSYHLAYD…RVLEMETPCK (128 aa)) the chain is on the cytoplasmic side.

This sequence belongs to the Casparian strip membrane proteins (CASP) family. In terms of assembly, homodimer and heterodimers.

Its subcellular location is the cell membrane. In Selaginella moellendorffii (Spikemoss), this protein is CASP-like protein 2U8.